Reading from the N-terminus, the 310-residue chain is tRNA-cytidine(32) 2-sulfurtransferase (310 aa).

Residues 45 to 50 (SGGKDS) carry the PP-loop motif motif. [4Fe-4S] cluster is bound by residues Cys-120, Cys-123, and Cys-211.

This sequence belongs to the TtcA family. In terms of assembly, homodimer. Mg(2+) is required as a cofactor. Requires [4Fe-4S] cluster as cofactor.

Its subcellular location is the cytoplasm. The catalysed reaction is cytidine(32) in tRNA + S-sulfanyl-L-cysteinyl-[cysteine desulfurase] + AH2 + ATP = 2-thiocytidine(32) in tRNA + L-cysteinyl-[cysteine desulfurase] + A + AMP + diphosphate + H(+). Its pathway is tRNA modification. In terms of biological role, catalyzes the ATP-dependent 2-thiolation of cytidine in position 32 of tRNA, to form 2-thiocytidine (s(2)C32). The sulfur atoms are provided by the cysteine/cysteine desulfurase (IscS) system. The protein is tRNA-cytidine(32) 2-sulfurtransferase of Shewanella baltica (strain OS195).